Reading from the N-terminus, the 666-residue chain is uncharacterized protein (666 aa).

The RNB domain occupies Arg263–Arg553.

This sequence belongs to the RNR ribonuclease family.

This is an uncharacterized protein from Synechocystis sp. (strain ATCC 27184 / PCC 6803 / Kazusa).